A 490-amino-acid chain; its full sequence is COP9 signalosome complex subunit 2 (490 aa).

Positions 1 to 30 (MSDDDFMQDSDQEYDFEYEDDEEEDTGDVD) are enriched in acidic residues. The disordered stretch occupies residues 1-32 (MSDDDFMQDSDQEYDFEYEDDEEEDTGDVDIE). The 169-residue stretch at 250–418 (SEENWKEAQS…GVLELESRED (169 aa)) folds into the PCI domain. The disordered stretch occupies residues 469–490 (DTMRSMGSGKRGRRVGLTQRAY).

This sequence belongs to the CSN2 family. As to quaternary structure, component of the COP9 signalosome (CSN) complex.

Its subcellular location is the cytoplasm. The protein resides in the nucleus. Its function is as follows. Component of the COP9 signalosome (CSN) complex that acts as an regulator of the ubiquitin (Ubl) conjugation pathway by mediating the deneddylation of the cullin subunit of SCF-type E3 ubiquitin-protein ligase complexes. The CSN complex is involved in the regulation of the circadian clock through its control of the stability of the SCF(FWD-1) complex. The protein is COP9 signalosome complex subunit 2 (csn-2) of Neurospora crassa (strain ATCC 24698 / 74-OR23-1A / CBS 708.71 / DSM 1257 / FGSC 987).